The sequence spans 1127 residues: Ras guanine nucleotide exchange factor F (1127 aa).

Disordered stretches follow at residues 1–82 and 96–154; these read MTDK…SLLN and NSGG…SSSS. 2 stretches are compositionally biased toward low complexity: residues 23 to 53 and 67 to 82; these read NQPSPSTSTPASPNVNSTNNSPSVSPATTSP and NNNNNTNIPHQTSLLN. A compositionally biased stretch (polar residues) spans 122-132; the sequence is RTSTTLAQFSG. A compositionally biased stretch (low complexity) spans 133-154; it reads SSLPNTENSSPPPSSSLISSSS. Kelch repeat units follow at residues 212 to 261, 262 to 311, 313 to 366, 367 to 418, and 420 to 469; these read GFYL…LYNN, SMYI…VESG, MIVF…MHKG, NMYV…LFQD, and IFIS…VKGN. The 33-residue stretch at 557 to 589 folds into the LisH domain; that stretch reads SHQFVLQLIMEYLERNTYHKVIAAIQKESGVLH. An N-terminal Ras-GEF domain is found at 673-804; sequence NKVQIKAATF…KLRELKKKLQ (132 aa). In terms of domain architecture, Ras-GEF spans 835–1062; it reads DELEIARQMT…YDLNLLSESL (228 aa). The interval 1090-1127 is disordered; that stretch reads LGSARELNNSNRDSNNITGSSSNNNSNSSNSLSPIVKL. Residues 1103 to 1127 are compositionally biased toward low complexity; that stretch reads SNNITGSSSNNNSNSSNSLSPIVKL.

Promotes the exchange of Ras-bound GDP by GTP. This is Ras guanine nucleotide exchange factor F (gefF) from Dictyostelium discoideum (Social amoeba).